Consider the following 360-residue polypeptide: Probable cinnamyl alcohol dehydrogenase 9 (360 aa).

A Zn(2+)-binding site is contributed by Cys50. NADP(+) is bound at residue Thr52. 7 residues coordinate Zn(2+): His72, Glu73, Cys103, Cys106, Cys109, Cys117, and Cys166. NADP(+)-binding positions include Thr170, 191–196 (GLGGLG), 214–219 (SSSSTK), Thr254, Gly278, and 301–303 (SDV).

The protein belongs to the zinc-containing alcohol dehydrogenase family. Homodimer. It depends on Zn(2+) as a cofactor. Expressed in the vasculature of the primary root and elongation regions. Expressed in the hypocotyl, cotyledon veins, vasculature of the first rosette leaves, and hydathodes. In stems, expressed in the vascular cambium, interfascicular cambium, developing xylem, and phloem. Expressed in the entire floral organs at late developing stage, and in the abscission, style and stigmatic regions of siliques and seed funicules.

It carries out the reaction (E)-cinnamyl alcohol + NADP(+) = (E)-cinnamaldehyde + NADPH + H(+). The protein operates within aromatic compound metabolism; phenylpropanoid biosynthesis. Involved in lignin biosynthesis. May catalyze the final step specific for the production of lignin monomers, like coniferyl alcohol, sinapyl alcohol and 4-coumaryl alcohol. The polypeptide is Probable cinnamyl alcohol dehydrogenase 9 (CAD9) (Arabidopsis thaliana (Mouse-ear cress)).